Here is a 59-residue protein sequence, read N- to C-terminus: Cuticle protein 7 isoform a (59 aa).

Gln1 is modified (pyrrolidone carboxylic acid).

The protein is Cuticle protein 7 isoform a of Limulus polyphemus (Atlantic horseshoe crab).